The sequence spans 74 residues: Protein krueppel (74 aa).

4 consecutive C2H2-type zinc fingers follow at residues 1 to 4 (ERTH), 10 to 32 (FECP…MRLH), 38 to 60 (YHCS…LRVH), and 66 to 74 (YACELCDAR).

The protein belongs to the krueppel C2H2-type zinc-finger protein family.

It is found in the nucleus. In terms of biological role, krueppel is a gap class segmentation protein. This Psychoda cinerea (Psychod fly) protein is Protein krueppel (Kr).